We begin with the raw amino-acid sequence, 332 residues long: 2,3-bisphosphoglycerate-dependent phosphoglycerate mutase 2 (332 aa).

Residues 1–48 constitute a chloroplast transit peptide; the sequence is MATSTTMSHQAIGSVVSQRPFKASQFLKEPLNNVPMKFRQKRFKIEAT. Residues 85 to 92, 98 to 99, Arg-135, 189 to 192, Lys-200, 216 to 217, and 260 to 261 each bind substrate; these read RHGESLWN, TG, ERMY, RR, and GN. His-86 serves as the catalytic Tele-phosphohistidine intermediate. Glu-189 serves as the catalytic Proton donor/acceptor.

The protein belongs to the phosphoglycerate mutase family. BPG-dependent PGAM subfamily.

The protein resides in the plastid. It localises to the chloroplast. The enzyme catalyses (2R)-2-phosphoglycerate = (2R)-3-phosphoglycerate. Its pathway is carbohydrate degradation; glycolysis; pyruvate from D-glyceraldehyde 3-phosphate: step 3/5. Catalyzes the interconversion of 2-phosphoglycerate and 3-phosphoglycerate. The protein is 2,3-bisphosphoglycerate-dependent phosphoglycerate mutase 2 of Arabidopsis thaliana (Mouse-ear cress).